A 614-amino-acid polypeptide reads, in one-letter code: Vitamin B12 transporter BtuB (614 aa).

Residues 1-20 (MIKKASLLTACSVTAFSAWA) form the signal peptide. Residues 26-33 (DTLVVTAN) carry the TonB box motif. The TBDR plug domain occupies 38–152 (PRSTVLAPTT…IGGVVNIITT (115 aa)). Residues Leu-83, Ser-85, Asn-92, and 110–111 (VS) contribute to the cyanocob(III)alamin site. Positions 155-614 (EPGTEISAGW…EYTLSGSYTF (460 aa)) constitute a TBDR beta-barrel domain. Beta stranded transmembrane passes span 158–165 (TEISAGWG), 169–178 (YQNYDVSTQQ), and 184–195 (TRVTLLGDYAHT). Ca(2+)-binding residues include Asp-199, Gln-211, Asp-213, and Asp-215. A run of 2 beta stranded transmembrane segments spans residues 217–227 (FLSKTLYGALE) and 232–248 (DAWS…NRTN). Tyr-249 and Asp-250 together coordinate Ca(2+). Ala-251 serves as a coordination point for cyanocob(III)alamin. Asp-261 is a binding site for Ca(2+). 14 beta stranded membrane passes run 263-277 (RKLY…LRYN), 279-296 (ELIK…KDYN), 309-325 (TLDE…NNVI), 328-337 (HGSIGAGVDW), 353-369 (YDQR…QQVG), 371-381 (FTFEGAARNDD), 385-400 (FGRH…WEFI), 403-417 (YRFI…KAPN), 434-443 (KSKQWEGAFE), 449-458 (VNWRISGYRN), 473-490 (YYNE…TANF), 494-509 (PLTH…ARNA), 517-529 (RRAK…QLDW), and 535-550 (DWGI…YDKD). Position 309 (Thr-309) interacts with cyanocob(III)alamin. Arg-517 contacts cyanocob(III)alamin. Tyr-551 provides a ligand contact to cyanocob(III)alamin. 3 consecutive transmembrane segments (beta stranded) span residues 558-572 (TVKM…LAVA), 585-596 (IANLFDKDYETV), and 602-614 (AGRE…SYTF). The TonB C-terminal box signature appears at 597–614 (YGYQTAGREYTLSGSYTF).

The protein belongs to the TonB-dependent receptor family. BtuB (TC 1.B.14.3.1) subfamily.

The protein localises to the cell outer membrane. In terms of biological role, involved in the active translocation of vitamin B12 (cyanocobalamin) across the outer membrane to the periplasmic space. It derives its energy for transport by interacting with the trans-periplasmic membrane protein TonB. The polypeptide is Vitamin B12 transporter BtuB (Escherichia coli O139:H28 (strain E24377A / ETEC)).